We begin with the raw amino-acid sequence, 189 residues long: Dual specificity phosphatase 21 (189 aa).

One can recognise a Tyrosine-protein phosphatase domain in the interval 20-161 (GLSQITASLF…LIHYEFKLFS (142 aa)). The segment at 43 to 128 (SNNHITTIIN…YLMKYHNMTL (86 aa)) is sufficient for mitochondrial localization. Cys105 serves as the catalytic Phosphocysteine intermediate.

This sequence belongs to the protein-tyrosine phosphatase family. Non-receptor class dual specificity subfamily. In terms of assembly, microtubule inner protein component of sperm flagellar doublet microtubules. In terms of tissue distribution, selectively expressed in testis.

The protein resides in the cytoplasm. Its subcellular location is the nucleus. It localises to the mitochondrion inner membrane. It is found in the cytoskeleton. The protein localises to the flagellum axoneme. The catalysed reaction is O-phospho-L-tyrosyl-[protein] + H2O = L-tyrosyl-[protein] + phosphate. It carries out the reaction O-phospho-L-seryl-[protein] + H2O = L-seryl-[protein] + phosphate. It catalyses the reaction O-phospho-L-threonyl-[protein] + H2O = L-threonyl-[protein] + phosphate. Functionally, protein phosphatase component of the sperm flagellar doublet microtubules. May act as a regulator of sperm motility by mediating dephosphorylation of sperm doublet microtubule proteins. Can dephosphorylate single and diphosphorylated synthetic MAPK peptides, with preference for the phosphotyrosine and diphosphorylated forms over phosphothreonine. This Mus musculus (Mouse) protein is Dual specificity phosphatase 21.